The sequence spans 288 residues: Centromere protein P (288 aa).

Positions 1–71 (MDAELAEVRA…HLESELSFLS (71 aa)) form a coiled coil. Serine 38 is subject to Phosphoserine.

The protein belongs to the CENP-P/CTF19 family. In terms of assembly, component of the CENPA-CAD complex, composed of CENPI, CENPK, CENPL, CENPO, CENPP, CENPQ, CENPR and CENPS. The CENPA-CAD complex interacts with the CENPA-NAC complex, at least composed of CENPA, CENPC, CENPH, CENPM, CENPN, CENPT and CENPU.

Its subcellular location is the nucleus. It is found in the chromosome. The protein resides in the centromere. Its function is as follows. Component of the CENPA-CAD (nucleosome distal) complex, a complex recruited to centromeres which is involved in assembly of kinetochore proteins, mitotic progression and chromosome segregation. May be involved in incorporation of newly synthesized CENPA into centromeres via its interaction with the CENPA-NAC complex. This chain is Centromere protein P (CENPP), found in Homo sapiens (Human).